The sequence spans 120 residues: U13-lycotoxin-Ls1a (120 aa).

The first 16 residues, 1–16 (MKTLFVLISILYAVYC), serve as a signal peptide directing secretion. A propeptide spanning residues 17 to 54 (FSSEEDVDSAYLANELEPVEDINSEQYAALEPKEEQER) is cleaved from the precursor. Intrachain disulfides connect cysteine 56/cysteine 70, cysteine 63/cysteine 76, cysteine 69/cysteine 87, and cysteine 78/cysteine 85. The 40-residue stretch at 56 to 95 (CADMGQDCKDDCDCCLNIATCNCWFGRYFCSCTFGDYQTC) folds into the Agouti domain.

Belongs to the neurotoxin 05 (agouti) family. Contains 6 disulfide bonds. As to expression, expressed by the venom gland.

The protein resides in the secreted. In Lycosa singoriensis (Wolf spider), this protein is U13-lycotoxin-Ls1a.